The primary structure comprises 137 residues: Venom allergen 4 (137 aa).

Positions 1-19 are cleaved as a signal peptide; that stretch reads MKTFVLVSCLLVFTQIIYA.

Belongs to the ant venom allergen 2/4 family. Monomer. As to expression, expressed by the venom gland.

The protein localises to the secreted. This chain is Venom allergen 4, found in Solenopsis geminata (Tropical fire ant).